The chain runs to 80 residues: Protein P9 (80 aa).

In terms of assembly, self-associates.

This chain is Protein P9, found in Beta vulgaris (Sugar beet).